The chain runs to 223 residues: Ion-translocating oxidoreductase complex subunit E (223 aa).

The next 7 helical transmembrane spans lie at 17-37 (SLVQ…TINA), 38-58 (IGLG…ISIL), 68-88 (IPIY…LLHA), 91-111 (FNLY…CIVV), 124-144 (VISF…MFVI), 156-176 (FLFG…FTFI), and 181-201 (TIIL…VIAF).

Belongs to the NqrDE/RnfAE family. As to quaternary structure, the complex is composed of six subunits: RnfA, RnfB, RnfC, RnfD, RnfE and RnfG.

The protein localises to the cell inner membrane. Functionally, part of a membrane-bound complex that couples electron transfer with translocation of ions across the membrane. The chain is Ion-translocating oxidoreductase complex subunit E from Buchnera aphidicola subsp. Schizaphis graminum (strain Sg).